A 371-amino-acid chain; its full sequence is uncharacterized protein (371 aa).

It to A.pernix APE_1804 and S.solfataricus SSO2105.

This is an uncharacterized protein from Aeropyrum pernix (strain ATCC 700893 / DSM 11879 / JCM 9820 / NBRC 100138 / K1).